A 750-amino-acid polypeptide reads, in one-letter code: 1,4-alpha-glucan branching enzyme GlgB (750 aa).

Catalysis depends on D425, which acts as the Nucleophile. The active-site Proton donor is the E478.

It belongs to the glycosyl hydrolase 13 family. GlgB subfamily. In terms of assembly, monomer.

The enzyme catalyses Transfers a segment of a (1-&gt;4)-alpha-D-glucan chain to a primary hydroxy group in a similar glucan chain.. The protein operates within glycan biosynthesis; glycogen biosynthesis. Catalyzes the formation of the alpha-1,6-glucosidic linkages in glycogen by scission of a 1,4-alpha-linked oligosaccharide from growing alpha-1,4-glucan chains and the subsequent attachment of the oligosaccharide to the alpha-1,6 position. The protein is 1,4-alpha-glucan branching enzyme GlgB of Cupriavidus pinatubonensis (strain JMP 134 / LMG 1197) (Cupriavidus necator (strain JMP 134)).